The sequence spans 363 residues: DNA replication and repair protein RecF (363 aa).

30-37 (GSNGSGKT) serves as a coordination point for ATP.

This sequence belongs to the RecF family.

It is found in the cytoplasm. Its function is as follows. The RecF protein is involved in DNA metabolism; it is required for DNA replication and normal SOS inducibility. RecF binds preferentially to single-stranded, linear DNA. It also seems to bind ATP. In Photorhabdus laumondii subsp. laumondii (strain DSM 15139 / CIP 105565 / TT01) (Photorhabdus luminescens subsp. laumondii), this protein is DNA replication and repair protein RecF.